Here is a 163-residue protein sequence, read N- to C-terminus: uncharacterized protein (163 aa).

4Fe-4S ferredoxin-type domains are found at residues 30-59, 61-90, 105-136, and 136-163; these read REII…YSSD, LYIT…IIRL, KYEF…EYGS, and SKIR…IILR. Positions 39, 42, 45, 49, 70, 73, 76, 80, 116, 119, 122, 126, 145, 148, 151, and 155 each coordinate [4Fe-4S] cluster.

This is an uncharacterized protein from Methanocaldococcus jannaschii (strain ATCC 43067 / DSM 2661 / JAL-1 / JCM 10045 / NBRC 100440) (Methanococcus jannaschii).